The primary structure comprises 264 residues: tRNA (guanine-N(1)-)-methyltransferase (264 aa).

Residues G133 and 152-157 (LGDFVM) each bind S-adenosyl-L-methionine. Basic and acidic residues predominate over residues 240-251 (QRRPDLWRKARG). A disordered region spans residues 240–264 (QRRPDLWRKARGGEPPADESGEVRR). Residues 255-264 (PADESGEVRR) show a composition bias toward acidic residues.

Belongs to the RNA methyltransferase TrmD family. In terms of assembly, homodimer.

The protein localises to the cytoplasm. The enzyme catalyses guanosine(37) in tRNA + S-adenosyl-L-methionine = N(1)-methylguanosine(37) in tRNA + S-adenosyl-L-homocysteine + H(+). Specifically methylates guanosine-37 in various tRNAs. The protein is tRNA (guanine-N(1)-)-methyltransferase of Sorangium cellulosum (strain So ce56) (Polyangium cellulosum (strain So ce56)).